A 177-amino-acid chain; its full sequence is SPbeta prophage-derived uncharacterized protein YopI (177 aa).

A helical transmembrane segment spans residues 11 to 31; the sequence is FEGIIGALLGVIVTLILTHIL.

Its subcellular location is the cell membrane. The sequence is that of SPbeta prophage-derived uncharacterized protein YopI (yopI) from Bacillus subtilis (strain 168).